A 123-amino-acid polypeptide reads, in one-letter code: Highly acidic elicitin 20 (123 aa).

The signal sequence occupies residues 1-20 (MQFTALFAATAVALVGSVSA). Intrachain disulfides connect cysteine 23–cysteine 91, cysteine 47–cysteine 76, and cysteine 71–cysteine 115.

It belongs to the elicitin family.

It localises to the secreted. In terms of biological role, induces local and distal defense responses (incompatible hypersensitive reaction) in plants from the solanaceae and cruciferae families. Elicits leaf necrosis and causes the accumulation of pathogenesis-related proteins. Might interact with the lipidic molecules of the plasma membrane. This is Highly acidic elicitin 20 (B20) from Phytophthora cryptogea.